The following is a 500-amino-acid chain: Na(+)/H(+) antiporter NhaB (500 aa).

The next 11 membrane-spanning stretches (helical) occupy residues 23–43 (VVIC…GPVA), 53–73 (IFTL…LLLI), 96–116 (VILL…LLLF), 129–149 (AILA…LDAL), 150–170 (TVTA…HRVA), 205–225 (LLMH…VGEP), 238–258 (FVDF…AGLV), 311–331 (ILII…LMVI), 350–370 (FQDA…VAVI), 450–470 (ATPN…APLI), and 477–497 (MVWM…WAVT).

The protein belongs to the NhaB Na(+)/H(+) (TC 2.A.34) antiporter family.

It is found in the cell inner membrane. It carries out the reaction 2 Na(+)(in) + 3 H(+)(out) = 2 Na(+)(out) + 3 H(+)(in). Functionally, na(+)/H(+) antiporter that extrudes sodium in exchange for external protons. The sequence is that of Na(+)/H(+) antiporter NhaB from Pseudomonas putida (strain ATCC 47054 / DSM 6125 / CFBP 8728 / NCIMB 11950 / KT2440).